The following is a 166-amino-acid chain: NAD(P)H-quinone oxidoreductase subunit I, chloroplastic (166 aa).

4Fe-4S ferredoxin-type domains follow at residues 55–84 (GRIH…VDWK) and 95–124 (LNYS…MTEE). 8 residues coordinate [4Fe-4S] cluster: Cys-64, Cys-67, Cys-70, Cys-74, Cys-104, Cys-107, Cys-110, and Cys-114.

It belongs to the complex I 23 kDa subunit family. In terms of assembly, NDH is composed of at least 16 different subunits, 5 of which are encoded in the nucleus. It depends on [4Fe-4S] cluster as a cofactor.

Its subcellular location is the plastid. It localises to the chloroplast thylakoid membrane. The enzyme catalyses a plastoquinone + NADH + (n+1) H(+)(in) = a plastoquinol + NAD(+) + n H(+)(out). It catalyses the reaction a plastoquinone + NADPH + (n+1) H(+)(in) = a plastoquinol + NADP(+) + n H(+)(out). Its function is as follows. NDH shuttles electrons from NAD(P)H:plastoquinone, via FMN and iron-sulfur (Fe-S) centers, to quinones in the photosynthetic chain and possibly in a chloroplast respiratory chain. The immediate electron acceptor for the enzyme in this species is believed to be plastoquinone. Couples the redox reaction to proton translocation, and thus conserves the redox energy in a proton gradient. This is NAD(P)H-quinone oxidoreductase subunit I, chloroplastic from Aphanactis jamesoniana.